Consider the following 193-residue polypeptide: ATP-dependent Clp protease proteolytic subunit (193 aa).

The active-site Nucleophile is the serine 98. Histidine 123 is an active-site residue.

The protein belongs to the peptidase S14 family. As to quaternary structure, fourteen ClpP subunits assemble into 2 heptameric rings which stack back to back to give a disk-like structure with a central cavity, resembling the structure of eukaryotic proteasomes.

It localises to the cytoplasm. It carries out the reaction Hydrolysis of proteins to small peptides in the presence of ATP and magnesium. alpha-casein is the usual test substrate. In the absence of ATP, only oligopeptides shorter than five residues are hydrolyzed (such as succinyl-Leu-Tyr-|-NHMec, and Leu-Tyr-Leu-|-Tyr-Trp, in which cleavage of the -Tyr-|-Leu- and -Tyr-|-Trp bonds also occurs).. In terms of biological role, cleaves peptides in various proteins in a process that requires ATP hydrolysis. Has a chymotrypsin-like activity. Plays a major role in the degradation of misfolded proteins. The sequence is that of ATP-dependent Clp protease proteolytic subunit from Mannheimia succiniciproducens (strain KCTC 0769BP / MBEL55E).